Here is a 545-residue protein sequence, read N- to C-terminus: Chaperonin GroEL (545 aa).

Residues 29-32 (TMGP), Lys50, 86-90 (DGTTT), Gly414, 477-479 (DAA), and Asp493 contribute to the ATP site.

This sequence belongs to the chaperonin (HSP60) family. As to quaternary structure, forms a cylinder of 14 subunits composed of two heptameric rings stacked back-to-back. Interacts with the co-chaperonin GroES.

Its subcellular location is the cytoplasm. It catalyses the reaction ATP + H2O + a folded polypeptide = ADP + phosphate + an unfolded polypeptide.. Functionally, together with its co-chaperonin GroES, plays an essential role in assisting protein folding. The GroEL-GroES system forms a nano-cage that allows encapsulation of the non-native substrate proteins and provides a physical environment optimized to promote and accelerate protein folding. In Campylobacter jejuni subsp. jejuni serotype O:6 (strain 81116 / NCTC 11828), this protein is Chaperonin GroEL.